A 271-amino-acid polypeptide reads, in one-letter code: Formamidopyrimidine-DNA glycosylase (271 aa).

The active-site Schiff-base intermediate with DNA is the proline 2. The active-site Proton donor is glutamate 3. Lysine 58 (proton donor; for beta-elimination activity) is an active-site residue. The DNA site is built by histidine 91, arginine 110, and arginine 152. The FPG-type zinc finger occupies 237–271; that stretch reads RVYGRTGLACMACETPVKQIVQGNRSTYYCPACQR. Catalysis depends on arginine 261, which acts as the Proton donor; for delta-elimination activity.

Belongs to the FPG family. As to quaternary structure, monomer. Zn(2+) serves as cofactor.

It catalyses the reaction Hydrolysis of DNA containing ring-opened 7-methylguanine residues, releasing 2,6-diamino-4-hydroxy-5-(N-methyl)formamidopyrimidine.. The enzyme catalyses 2'-deoxyribonucleotide-(2'-deoxyribose 5'-phosphate)-2'-deoxyribonucleotide-DNA = a 3'-end 2'-deoxyribonucleotide-(2,3-dehydro-2,3-deoxyribose 5'-phosphate)-DNA + a 5'-end 5'-phospho-2'-deoxyribonucleoside-DNA + H(+). Its function is as follows. Involved in base excision repair of DNA damaged by oxidation or by mutagenic agents. Acts as a DNA glycosylase that recognizes and removes damaged bases. Has a preference for oxidized purines, such as 7,8-dihydro-8-oxoguanine (8-oxoG). Has AP (apurinic/apyrimidinic) lyase activity and introduces nicks in the DNA strand. Cleaves the DNA backbone by beta-delta elimination to generate a single-strand break at the site of the removed base with both 3'- and 5'-phosphates. The sequence is that of Formamidopyrimidine-DNA glycosylase from Thioalkalivibrio sulfidiphilus (strain HL-EbGR7).